A 661-amino-acid chain; its full sequence is Tegument protein UL46 homolog (661 aa).

The interval 1 to 31 is disordered; it reads MFSRFARSFSSDDRTRKSYDGSYQSFNAGER. Residues 10–19 show a composition bias toward basic and acidic residues; the sequence is SSDDRTRKSY. The next 2 membrane-spanning stretches (helical) occupy residues 299-319 and 339-359; these read AGTGVAFILAATTASALTALL and AAIVAAVELITLLHHHFQYLI.

The protein belongs to the herpesviridae HHV-1 VP11/12 protein family. In terms of processing, phosphorylated by host LCK. The phosphorylation seems to be lymphocyte-specific.

The protein resides in the virion tegument. The protein localises to the host cytoplasm. Its subcellular location is the host membrane. Plays a role in the activation of the host PI3K/AKT pathway to promote cell survival. Interacts with and activates PI3KR1 in order to phosphorylate host AKT on its activating residues. Activates the host AP-1 pathway by triggering phosphorylation of host ERK1/2. Participates in host BIM and BAD phosphorylation, leading to apoptosis inhibition. This chain is Tegument protein UL46 homolog, found in Varicella-zoster virus (strain Oka vaccine) (HHV-3).